Reading from the N-terminus, the 333-residue chain is Transaldolase (333 aa).

The active-site Schiff-base intermediate with substrate is K135.

Belongs to the transaldolase family. Type 1 subfamily. In terms of assembly, homodimer.

It is found in the cytoplasm. It catalyses the reaction D-sedoheptulose 7-phosphate + D-glyceraldehyde 3-phosphate = D-erythrose 4-phosphate + beta-D-fructose 6-phosphate. Its pathway is carbohydrate degradation; pentose phosphate pathway; D-glyceraldehyde 3-phosphate and beta-D-fructose 6-phosphate from D-ribose 5-phosphate and D-xylulose 5-phosphate (non-oxidative stage): step 2/3. Its function is as follows. Transaldolase is important for the balance of metabolites in the pentose-phosphate pathway. The sequence is that of Transaldolase from Prochlorococcus marinus subsp. pastoris (strain CCMP1986 / NIES-2087 / MED4).